Here is a 405-residue protein sequence, read N- to C-terminus: Elongation factor Tu (405 aa).

The tr-type G domain occupies 10 to 215; that stretch reads KPHVNVGTIG…AVDSYIPTPE (206 aa). The G1 stretch occupies residues 19–26; sequence GHVDHGKT. Residue 19–26 participates in GTP binding; the sequence is GHVDHGKT. Threonine 26 contributes to the Mg(2+) binding site. Residues 61–65 form a G2 region; it reads GITIN. Positions 82–85 are G3; it reads DCPG. GTP-binding positions include 82-86 and 137-140; these read DCPGH and NKVD. A G4 region spans residues 137–140; sequence NKVD. Residues 175–177 form a G5 region; sequence SAL.

Belongs to the TRAFAC class translation factor GTPase superfamily. Classic translation factor GTPase family. EF-Tu/EF-1A subfamily. Monomer.

It localises to the cytoplasm. The catalysed reaction is GTP + H2O = GDP + phosphate + H(+). In terms of biological role, GTP hydrolase that promotes the GTP-dependent binding of aminoacyl-tRNA to the A-site of ribosomes during protein biosynthesis. This is Elongation factor Tu from Deinonema sp.